A 322-amino-acid chain; its full sequence is ATP-dependent 6-phosphofructokinase (322 aa).

Gly-11 contributes to the ATP binding site. 21–25 is a binding site for ADP; sequence RAVVR. ATP contacts are provided by residues 72–73 and 102–105; these read RC and GDGS. Asp-103 provides a ligand contact to Mg(2+). 127–129 serves as a coordination point for substrate; the sequence is TID. The Proton acceptor role is filled by Asp-129. Arg-156 contacts ADP. Substrate is bound by residues Arg-164 and 171–173; that span reads MGR. ADP contacts are provided by residues 187–189, Arg-213, and 215–217; these read GAE and KKH. Residues Glu-224, Arg-245, and 251–254 contribute to the substrate site; that span reads HVQR.

It belongs to the phosphofructokinase type A (PFKA) family. ATP-dependent PFK group I subfamily. Prokaryotic clade 'B1' sub-subfamily. Homotetramer. Mg(2+) serves as cofactor.

Its subcellular location is the cytoplasm. The enzyme catalyses beta-D-fructose 6-phosphate + ATP = beta-D-fructose 1,6-bisphosphate + ADP + H(+). It participates in carbohydrate degradation; glycolysis; D-glyceraldehyde 3-phosphate and glycerone phosphate from D-glucose: step 3/4. Allosterically activated by ADP and other diphosphonucleosides, and allosterically inhibited by phosphoenolpyruvate. Catalyzes the phosphorylation of D-fructose 6-phosphate to fructose 1,6-bisphosphate by ATP, the first committing step of glycolysis. This is ATP-dependent 6-phosphofructokinase from Staphylococcus aureus (strain JH1).